A 240-amino-acid chain; its full sequence is Protein OPG176 (240 aa).

Belongs to the orthopoxvirus OPG176 family. Tetramer. Interacts with host MYD88, TRF4, TICAM2 and MAL.

In terms of biological role, BCL2-like protein which disrupts the host immune response by inhibiting the TLR4 signaling pathway leading to NF-kappa-B activation. Acts close to the plasma membrane and targets several host TIR-domain containing adapter proteins including MYD88, TIRAP, TRIF and TICAM2. In turn, blocks the host NF-kappa-B and TRIF-mediated IRF3 activation. The polypeptide is Protein OPG176 (OPG176) (Bos taurus (Bovine)).